Reading from the N-terminus, the 351-residue chain is Hydroxymethylglutaryl-CoA synthase (351 aa).

Glu-80 acts as the Proton donor/acceptor in catalysis. Residue Cys-112 is the Acyl-thioester intermediate of the active site. (3S)-3-hydroxy-3-methylglutaryl-CoA-binding residues include Cys-112 and Ser-153. Arg-199 lines the CoA pocket. The (3S)-3-hydroxy-3-methylglutaryl-CoA site is built by Thr-201 and His-234. Catalysis depends on His-234, which acts as the Proton donor/acceptor. Position 239 (Lys-239) interacts with CoA. (3S)-3-hydroxy-3-methylglutaryl-CoA contacts are provided by Arg-243, Asn-266, and Ser-296.

It belongs to the thiolase-like superfamily. Archaeal HMG-CoA synthase family. In terms of assembly, interacts with acetoacetyl-CoA thiolase that catalyzes the precedent step in the pathway and with a DUF35 protein. The acetoacetyl-CoA thiolase/HMG-CoA synthase complex channels the intermediate via a fused CoA-binding site, which allows for efficient coupling of the endergonic thiolase reaction with the exergonic HMGCS reaction.

It catalyses the reaction acetoacetyl-CoA + acetyl-CoA + H2O = (3S)-3-hydroxy-3-methylglutaryl-CoA + CoA + H(+). It functions in the pathway metabolic intermediate biosynthesis; (R)-mevalonate biosynthesis; (R)-mevalonate from acetyl-CoA: step 2/3. Its function is as follows. Catalyzes the condensation of acetyl-CoA with acetoacetyl-CoA to form 3-hydroxy-3-methylglutaryl-CoA (HMG-CoA). Functions in the mevalonate (MVA) pathway leading to isopentenyl diphosphate (IPP), a key precursor for the biosynthesis of isoprenoid compounds that are building blocks of archaeal membrane lipids. The polypeptide is Hydroxymethylglutaryl-CoA synthase (Thermoplasma acidophilum (strain ATCC 25905 / DSM 1728 / JCM 9062 / NBRC 15155 / AMRC-C165)).